A 94-amino-acid chain; its full sequence is Large ribosomal subunit protein uL23 (94 aa).

This sequence belongs to the universal ribosomal protein uL23 family. As to quaternary structure, part of the 50S ribosomal subunit. Contacts protein L29, and trigger factor when it is bound to the ribosome.

Its function is as follows. One of the early assembly proteins it binds 23S rRNA. One of the proteins that surrounds the polypeptide exit tunnel on the outside of the ribosome. Forms the main docking site for trigger factor binding to the ribosome. The sequence is that of Large ribosomal subunit protein uL23 from Phytoplasma australiense.